The sequence spans 146 residues: SLSGAEADLLAKSWAPVFANKDANGDNFLIALFEAFPDSANFFGDFKGKSIADIRASPKLRSVSSRIVNRLNDFVGNAADAGKMAGMLDQFSKEHVGFGVGSQQFENVRSMFPGFVSSVAAPPAGADAAWGKLFGLIIDALKKAGK.

Position 1 is an N-acetylserine (Ser-1). The Globin domain maps to 1-146; the sequence is SLSGAEADLL…IIDALKKAGK (146 aa). His-95 provides a ligand contact to heme b.

Belongs to the globin family. As to quaternary structure, monomer.

This is Globin from Bursatella leachii (Ragged sea hare).